Consider the following 232-residue polypeptide: Large ribosomal subunit protein uL1 (232 aa).

The protein belongs to the universal ribosomal protein uL1 family. In terms of assembly, part of the 50S ribosomal subunit.

In terms of biological role, binds directly to 23S rRNA. The L1 stalk is quite mobile in the ribosome, and is involved in E site tRNA release. Functionally, protein L1 is also a translational repressor protein, it controls the translation of the L11 operon by binding to its mRNA. This is Large ribosomal subunit protein uL1 from Burkholderia ambifaria (strain MC40-6).